The sequence spans 177 residues: Large ribosomal subunit protein uL6 (177 aa).

This sequence belongs to the universal ribosomal protein uL6 family. Part of the 50S ribosomal subunit.

This protein binds to the 23S rRNA, and is important in its secondary structure. It is located near the subunit interface in the base of the L7/L12 stalk, and near the tRNA binding site of the peptidyltransferase center. The polypeptide is Large ribosomal subunit protein uL6 (Rhodospirillum centenum (strain ATCC 51521 / SW)).